We begin with the raw amino-acid sequence, 292 residues long: Small ribosomal subunit biogenesis GTPase RsgA (292 aa).

In terms of domain architecture, CP-type G spans 64–221 (RSELFRPAVA…LVDTPGFSSL (158 aa)). GTP contacts are provided by residues 113 to 116 (NKMD) and 164 to 172 (GPSGVGKST). Zn(2+)-binding residues include Cys-245, Cys-250, His-252, and Cys-258.

The protein belongs to the TRAFAC class YlqF/YawG GTPase family. RsgA subfamily. In terms of assembly, monomer. Associates with 30S ribosomal subunit, binds 16S rRNA. It depends on Zn(2+) as a cofactor.

The protein resides in the cytoplasm. Its function is as follows. One of several proteins that assist in the late maturation steps of the functional core of the 30S ribosomal subunit. Helps release RbfA from mature subunits. May play a role in the assembly of ribosomal proteins into the subunit. Circularly permuted GTPase that catalyzes slow GTP hydrolysis, GTPase activity is stimulated by the 30S ribosomal subunit. This chain is Small ribosomal subunit biogenesis GTPase RsgA, found in Clostridium botulinum (strain Okra / Type B1).